The following is a 362-amino-acid chain: MIAEKIRVALDERSYDIEMGAGNLDRIGSLCREVGLSGTAAVVSNTTVAPLYYETVRLSMERAGYRVVPVTLPDGEGYKNSATLNLIYDGLVDASLDRGSFILALGGGVIGDMAGFAAASYLRGIPFVQIPTTLLSQVDSSVGGKTGINHPRGKNLIGSFYQPKAVLIDVATLDTLPEREFLSGLGEIVKYGAVLDGGFFDFLEQNAKLLLARDKEALIQAVSRSCAIKAKVVAEDEREGGVRAVLNFGHTLGHAVETLTGYTRYLHGEAVAIGMVQAARISQHYGFCSQADRERIEALIVALGLPIELPIFPAQQYREALSHDKKVRDKGLLFICNQGIGAYRMERLTDLGALLEICGIGE.

NAD(+)-binding positions include 74-79 (DGEGYK), 108-112 (GVIGD), 132-133 (TT), Lys145, Lys154, and 172-175 (TLDT). 3 residues coordinate Zn(2+): Glu187, His250, and His267.

The protein belongs to the sugar phosphate cyclases superfamily. Dehydroquinate synthase family. Co(2+) is required as a cofactor. It depends on Zn(2+) as a cofactor. Requires NAD(+) as cofactor.

Its subcellular location is the cytoplasm. The catalysed reaction is 7-phospho-2-dehydro-3-deoxy-D-arabino-heptonate = 3-dehydroquinate + phosphate. It participates in metabolic intermediate biosynthesis; chorismate biosynthesis; chorismate from D-erythrose 4-phosphate and phosphoenolpyruvate: step 2/7. Catalyzes the conversion of 3-deoxy-D-arabino-heptulosonate 7-phosphate (DAHP) to dehydroquinate (DHQ). This chain is 3-dehydroquinate synthase, found in Geobacter sp. (strain M21).